The primary structure comprises 584 residues: UvrABC system protein C (584 aa).

The GIY-YIG domain maps to 12 to 89 (NKPGCYLFLN…IKKYRPKYNV (78 aa)). A UVR domain is found at 194 to 229 (NQVKQTLVKQMQKASDNLQFEQAKRIKDQITSLDFI).

It belongs to the UvrC family. In terms of assembly, interacts with UvrB in an incision complex.

It localises to the cytoplasm. Its function is as follows. The UvrABC repair system catalyzes the recognition and processing of DNA lesions. UvrC both incises the 5' and 3' sides of the lesion. The N-terminal half is responsible for the 3' incision and the C-terminal half is responsible for the 5' incision. In Mycoplasma capricolum subsp. capricolum (strain California kid / ATCC 27343 / NCTC 10154), this protein is UvrABC system protein C.